The chain runs to 241 residues: 7-cyano-7-deazaguanine synthase (241 aa).

15–25 (FSGGQDSTTTL) provides a ligand contact to ATP. Residues Cys203, Cys218, Cys221, and Cys224 each contribute to the Zn(2+) site.

Belongs to the QueC family. The cofactor is Zn(2+).

It catalyses the reaction 7-carboxy-7-deazaguanine + NH4(+) + ATP = 7-cyano-7-deazaguanine + ADP + phosphate + H2O + H(+). Its pathway is purine metabolism; 7-cyano-7-deazaguanine biosynthesis. Functionally, catalyzes the ATP-dependent conversion of 7-carboxy-7-deazaguanine (CDG) to 7-cyano-7-deazaguanine (preQ(0)). In Azorhizobium caulinodans (strain ATCC 43989 / DSM 5975 / JCM 20966 / LMG 6465 / NBRC 14845 / NCIMB 13405 / ORS 571), this protein is 7-cyano-7-deazaguanine synthase.